The following is a 352-amino-acid chain: RING finger protein 39 (352 aa).

An RING-type zinc finger spans residues 20–67 (CPLCGGPFEDPVLLACEHSFCRSCLARCWGSPAAPGSEEATPSCPCCG). The tract at residues 98–118 (PGARTGRRRGGRIPTMGCLDP) is disordered. Residues 142-352 (EDLPEDYPVV…APLRIVPGEA (211 aa)) form the B30.2/SPRY domain.

Expressed in the hippocampus. Expression is rapidly up-regulated in granule cells of the dentate gyrus after LTP induction.

The protein resides in the cytoplasm. The enzyme catalyses S-ubiquitinyl-[E2 ubiquitin-conjugating enzyme]-L-cysteine + [acceptor protein]-L-lysine = [E2 ubiquitin-conjugating enzyme]-L-cysteine + N(6)-ubiquitinyl-[acceptor protein]-L-lysine.. The protein operates within protein modification; protein ubiquitination. Plays an inhibitory role in anti-RNA viral innate immunity by targeting the adapter DDX3X and promoting its 'Lys-48'-linked polyubiquitination. Alternatively, enhances the cGAS-STING pathway activation by promoting 'Lys-63'-linked ubiquitination of STING1, facilitating the STING1-TBK1 complex formation and STING1 activation. The chain is RING finger protein 39 (Rnf39) from Rattus norvegicus (Rat).